A 213-amino-acid chain; its full sequence is High frequency lysogenization protein HflD homolog (213 aa).

Positions 79-126 form a coiled coil; it reads QGLNAELTRYTLSLMVLERKLSSAKGALDTLGNRINGLQRQLEHFDLQ.

It belongs to the HflD family.

Its subcellular location is the cytoplasm. The protein resides in the cell inner membrane. This chain is High frequency lysogenization protein HflD homolog, found in Shigella dysenteriae serotype 1 (strain Sd197).